The following is a 336-amino-acid chain: Glyceraldehyde-3-phosphate dehydrogenase, chromosomal (336 aa).

NAD(+)-binding positions include 12-13 (RI), Asp37, Arg81, and Ser123. Residues 154–156 (SCT) and Thr185 each bind D-glyceraldehyde 3-phosphate. Cys155 functions as the Nucleophile in the catalytic mechanism. Asn186 is a binding site for NAD(+). Residues Arg200, 213 to 214 (TG), and Arg236 each bind D-glyceraldehyde 3-phosphate. An NAD(+)-binding site is contributed by Asn317.

It belongs to the glyceraldehyde-3-phosphate dehydrogenase family. Homotetramer.

The catalysed reaction is D-glyceraldehyde 3-phosphate + phosphate + NAD(+) = (2R)-3-phospho-glyceroyl phosphate + NADH + H(+). It functions in the pathway carbohydrate biosynthesis; Calvin cycle. Functionally, could be involved in carbon fixation as a component of the Calvin cycle. Catalyzes the oxidative phosphorylation of glyceraldehyde 3-phosphate (G3P) to 1,3-bisphosphoglycerate (BPG) using the cofactor NAD. The first reaction step involves the formation of a hemiacetal intermediate between G3P and a cysteine residue, and this hemiacetal intermediate is then oxidized to a thioester, with concomitant reduction of NAD to NADH. The reduced NADH is then exchanged with the second NAD, and the thioester is attacked by a nucleophilic inorganic phosphate to produce BPG. In Cupriavidus necator (strain ATCC 17699 / DSM 428 / KCTC 22496 / NCIMB 10442 / H16 / Stanier 337) (Ralstonia eutropha), this protein is Glyceraldehyde-3-phosphate dehydrogenase, chromosomal (cbbGC).